The primary structure comprises 586 residues: MVSGKIVKIAGPVVVAEGMKGAQMYEVVKVGNEGLTGEIIQLESDKAVIQVYEETAGIVPGEPVEGTGAPLSAELGPGMLKAMYDGIQRPLTAIEDATKSIYIPRGVSVPSISREAKWDFTPTVNVGDKVEAGDIIGTVPETKSIVHKIMIPNGISGTIKEIKSGSFTVVEPIAIVETENGEEKEIIMMQKWPVRNPRPYKEKLPPEIPLVTGQRLEDTFFGLAKGGASAIPGPFGSGKTVTQHQLAKWSDADIVVYIGCGERGNEMTEVIEEFPHLDDLKTGNKLMDRTVLIANTSNMPVAAREASVYTGITIAEYFRDMGYGVLLTADSTSRWAEAMREISGRLEEMPGEEGYPAYLSSRLAQFYERAGRVACMGHDEKQGFVCIVGAVSPPGGDFSEPVTSNTLRIVKVFWALDANLARRRHFPAINWLQSYSLYLDDIEDWWKENTAEDWREIRDEAMNLLQKEAELQEIVQLVGPDALPDKERVILEVSRMLREDFLQQDAFSDIDSYCSPMKQYTMLKTIMTFYSKAILAVEKGADPADIAKVSVKQDVAKMKYTPEEEFLNKLAPAIVEKISKELDALV.

ATP is bound at residue G233–T240.

The protein belongs to the ATPase alpha/beta chains family. As to quaternary structure, has multiple subunits with at least A(3), B(3), C, D, E, F, H, I and proteolipid K(x).

The protein localises to the cell membrane. The catalysed reaction is ATP + H2O + 4 H(+)(in) = ADP + phosphate + 5 H(+)(out). Its function is as follows. Component of the A-type ATP synthase that produces ATP from ADP in the presence of a proton gradient across the membrane. The A chain is the catalytic subunit. The polypeptide is A-type ATP synthase subunit A (Methanococcus aeolicus (strain ATCC BAA-1280 / DSM 17508 / OCM 812 / Nankai-3)).